Here is a 3590-residue protein sequence, read N- to C-terminus: Filamentous hemagglutinin (3590 aa).

2 disordered regions span residues 3256–3309 (GGGS…VEVS) and 3417–3498 (APPP…GRHV). Residues 3289-3299 (PSRPTTPPASP) show a composition bias toward pro residues. Low complexity predominate over residues 3300–3309 (QPIRATVEVS). The span at 3417–3432 (APPPVVETAQPLPPVK) shows a compositional bias: pro residues.

The protein resides in the cell surface. In terms of biological role, evidence for a role in host-cell binding and infection. The sequence is that of Filamentous hemagglutinin (fhaB) from Bordetella pertussis (strain Tohama I / ATCC BAA-589 / NCTC 13251).